The primary structure comprises 442 residues: Glutamyl-tRNA reductase (442 aa).

Substrate is bound by residues threonine 50 to arginine 53, serine 109, glutamate 114 to glutamine 116, and glutamine 120. Residue cysteine 51 is the Nucleophile of the active site. Residue glycine 189 to alanine 194 coordinates NADP(+).

It belongs to the glutamyl-tRNA reductase family. Homodimer.

It catalyses the reaction (S)-4-amino-5-oxopentanoate + tRNA(Glu) + NADP(+) = L-glutamyl-tRNA(Glu) + NADPH + H(+). It functions in the pathway porphyrin-containing compound metabolism; protoporphyrin-IX biosynthesis; 5-aminolevulinate from L-glutamyl-tRNA(Glu): step 1/2. Functionally, catalyzes the NADPH-dependent reduction of glutamyl-tRNA(Glu) to glutamate 1-semialdehyde (GSA). In Nitratidesulfovibrio vulgaris (strain DSM 19637 / Miyazaki F) (Desulfovibrio vulgaris), this protein is Glutamyl-tRNA reductase.